A 935-amino-acid polypeptide reads, in one-letter code: Protocadherin gamma-A11 (935 aa).

The signal sequence occupies residues 1-29 (MANRLQRGDRSRLLLLLCIFLGTLRGFRA). 6 Cadherin domains span residues 30-134 (RQIR…APSF), 135-243 (QEDE…IPMF), 244-348 (TQSV…APEI), 349-453 (TITS…PPVF), 454-563 (PHSS…APEI), and 571-677 (DGST…ADLG). Topologically, residues 30-693 (RQIRYSVPEE…NSEASDLSLY (664 aa)) are extracellular. Asparagine 48 carries an N-linked (GlcNAc...) asparagine glycan. Asparagine 255, asparagine 266, asparagine 420, and asparagine 546 each carry an N-linked (GlcNAc...) asparagine glycan. Residues 694 to 714 (LVVAVAAVSCIFLVFVIVLLA) form a helical membrane-spanning segment. Topologically, residues 715–935 (LRLWRWHKSR…KKKSGKKEKK (221 aa)) are cytoplasmic. Disordered regions lie at residues 805-844 (CDPT…WPNN) and 905-935 (ATLT…KEKK). A compositionally biased stretch (polar residues) spans 807 to 844 (PTSNQQAPPNTDWRFSQAQRPGTSGSQNGDDTGTWPNN). Positions 925 to 935 (NKKKSGKKEKK) are enriched in basic residues.

It is found in the cell membrane. In terms of biological role, potential calcium-dependent cell-adhesion protein. May be involved in the establishment and maintenance of specific neuronal connections in the brain. The protein is Protocadherin gamma-A11 (PCDHGA11) of Pan troglodytes (Chimpanzee).